We begin with the raw amino-acid sequence, 198 residues long: NAD(P)H dehydrogenase (quinone) (198 aa).

Residues isoleucine 4–valine 189 enclose the Flavodoxin-like domain. Residues serine 10–isoleucine 15 and threonine 78–phenylalanine 80 contribute to the FMN site. Position 12 (tyrosine 12) interacts with NAD(+). A substrate-binding site is contributed by tryptophan 98. FMN contacts are provided by residues serine 113–glycine 118 and histidine 133.

This sequence belongs to the WrbA family. Requires FMN as cofactor.

The catalysed reaction is a quinone + NADH + H(+) = a quinol + NAD(+). It catalyses the reaction a quinone + NADPH + H(+) = a quinol + NADP(+). This is NAD(P)H dehydrogenase (quinone) from Citrobacter koseri (strain ATCC BAA-895 / CDC 4225-83 / SGSC4696).